A 322-amino-acid chain; its full sequence is MFEIHPVKKVSVVIPVYNEQESLPELIRRTTKACESLGKEYEILLIDDGSSDNSAHMLVDASQAEGSHIVSILLNRNYGQHSAIMAGFSHVTGDLIITLDADLQNPPEEIPRLVAKADEGYDVVGTVRQNRQDSWFRKTASKMINRLIQRTTGKAMGDYGCMLRAYRRHIVDAMLHCHERSTFIPILANIFARRAIEIPVHHAEREFGESKYSFMRLINLMYDLVTCLTTTPLRMLSLLGSIIAIGGFSIAVLLVILRLTFGPQWAAEGVFMLFAVLFTFIGAQFIGMGLLGEYIGRIYTDVRARPRYFVQQVIRPSSKENE.

Over 1–235 (MFEIHPVKKV…TCLTTTPLRM (235 aa)) the chain is Cytoplasmic. The chain crosses the membrane as a helical span at residues 236 to 256 (LSLLGSIIAIGGFSIAVLLVI). Over 257-269 (LRLTFGPQWAAEG) the chain is Periplasmic. A helical transmembrane segment spans residues 270–290 (VFMLFAVLFTFIGAQFIGMGL). At 291–322 (LGEYIGRIYTDVRARPRYFVQQVIRPSSKENE) the chain is on the cytoplasmic side.

It belongs to the glycosyltransferase 2 family.

It localises to the cell inner membrane. It carries out the reaction UDP-4-deoxy-4-formamido-beta-L-arabinose + di-trans,octa-cis-undecaprenyl phosphate = 4-deoxy-4-formamido-alpha-L-arabinopyranosyl di-trans,octa-cis-undecaprenyl phosphate + UDP. It functions in the pathway glycolipid biosynthesis; 4-amino-4-deoxy-alpha-L-arabinose undecaprenyl phosphate biosynthesis; 4-amino-4-deoxy-alpha-L-arabinose undecaprenyl phosphate from UDP-4-deoxy-4-formamido-beta-L-arabinose and undecaprenyl phosphate: step 1/2. The protein operates within bacterial outer membrane biogenesis; lipopolysaccharide biosynthesis. Functionally, catalyzes the transfer of 4-deoxy-4-formamido-L-arabinose from UDP to undecaprenyl phosphate. The modified arabinose is attached to lipid A and is required for resistance to polymyxin and cationic antimicrobial peptides. The polypeptide is Undecaprenyl-phosphate 4-deoxy-4-formamido-L-arabinose transferase (Escherichia coli O7:K1 (strain IAI39 / ExPEC)).